We begin with the raw amino-acid sequence, 353 residues long: Ribosomal RNA small subunit methyltransferase C (353 aa).

Belongs to the methyltransferase superfamily. RsmC family. Monomer.

Its subcellular location is the cytoplasm. It carries out the reaction guanosine(1207) in 16S rRNA + S-adenosyl-L-methionine = N(2)-methylguanosine(1207) in 16S rRNA + S-adenosyl-L-homocysteine + H(+). Its function is as follows. Specifically methylates the guanine in position 1207 of 16S rRNA in the 30S particle. This Marinomonas sp. (strain MWYL1) protein is Ribosomal RNA small subunit methyltransferase C.